A 309-amino-acid chain; its full sequence is Protein FdhE homolog (309 aa).

Belongs to the FdhE family.

The protein localises to the cytoplasm. Its function is as follows. Necessary for formate dehydrogenase activity. The sequence is that of Protein FdhE homolog from Pseudomonas aeruginosa (strain ATCC 15692 / DSM 22644 / CIP 104116 / JCM 14847 / LMG 12228 / 1C / PRS 101 / PAO1).